Consider the following 341-residue polypeptide: Phosphoribosylformylglycinamidine cyclo-ligase (341 aa).

Belongs to the AIR synthase family.

The protein resides in the cytoplasm. It catalyses the reaction 2-formamido-N(1)-(5-O-phospho-beta-D-ribosyl)acetamidine + ATP = 5-amino-1-(5-phospho-beta-D-ribosyl)imidazole + ADP + phosphate + H(+). It participates in purine metabolism; IMP biosynthesis via de novo pathway; 5-amino-1-(5-phospho-D-ribosyl)imidazole from N(2)-formyl-N(1)-(5-phospho-D-ribosyl)glycinamide: step 2/2. The protein is Phosphoribosylformylglycinamidine cyclo-ligase of Xanthomonas oryzae pv. oryzae (strain MAFF 311018).